Consider the following 104-residue polypeptide: UPF0134 protein MPN_104 (104 aa).

It belongs to the UPF0134 family.

The protein is UPF0134 protein MPN_104 of Mycoplasma pneumoniae (strain ATCC 29342 / M129 / Subtype 1) (Mycoplasmoides pneumoniae).